The sequence spans 399 residues: Semaphorin-like protein 139 (399 aa).

Positions 1–14 (MIPLLFILFYFTNC) are cleaved as a signal peptide. Residues 15–399 (IEWHKFETSE…IPRMKKILKM (385 aa)) form the Sema domain.

The protein belongs to the semaphorin family. In terms of assembly, interacts with host VESPR.

It localises to the secreted. Its function is as follows. Acts as a semaphorin-like protein and binds to host plexin C1 receptor. May alter the movement of plexin C1-expressing cells including dendritic cells, monocytes, or granulocytes in the proximity of infected cells. May also regulate host cell cytoskeleton of neighboring cells to improve viral infection. The protein is Semaphorin-like protein 139 (EVM139) of Ectromelia virus (strain Moscow) (ECTV).